Consider the following 311-residue polypeptide: Vomeronasal type-1 receptor 3 (311 aa).

Topologically, residues 1–5 are extracellular; sequence MASKD. A helical transmembrane segment spans residues 6-26; it reads FAIGMILLSQIMVGFLGNFFL. At 27 to 51 the chain is on the cytoplasmic side; that stretch reads LYHYSFLCFTRGMLQSTDLILKHLT. The helical transmembrane segment at 52–72 threads the bilayer; it reads IANSLVILSKGIPQTMAAFGL. Topologically, residues 73 to 92 are extracellular; it reads KDSLSDIGCKFVFYVHRVGR. A helical transmembrane segment spans residues 93–113; sequence AVCVGNACLLSVFQVITISPS. The Cytoplasmic segment spans residues 114–130; sequence EFRWAELKLHAHKYIRS. The chain crosses the membrane as a helical span at residues 131–151; the sequence is FILVLCWILNTLVNITVLLHV. Residues 152-187 are Extracellular-facing; sequence TGKWNSINSTKTNDYGYCSGGSRSRIPHSLHIVLLS. An N-linked (GlcNAc...) asparagine glycan is attached at Asn-159. The chain crosses the membrane as a helical span at residues 188 to 208; it reads SLDVLCLGLMTLASGSMVFIL. At 209-232 the chain is on the cytoplasmic side; the sequence is HRHKQQVQHIHGTNLSARSSPESR. A helical membrane pass occupies residues 233–249; that stretch reads VTQSILVLVSTLCYFTR. Residues 250 to 264 are Extracellular-facing; that stretch reads SPPSLHMSLFPNPSW. A helical membrane pass occupies residues 265-285; the sequence is WLLNTSALITACFPMVSPFVL. Over 286 to 311 the chain is Cytoplasmic; it reads MSRHPRIPRLGSACCGRNPQFPKLVR.

The protein belongs to the G-protein coupled receptor 1 family.

The protein localises to the cell membrane. Putative pheromone receptor. This chain is Vomeronasal type-1 receptor 3 (VN1R3), found in Homo sapiens (Human).